Here is a 98-residue protein sequence, read N- to C-terminus: Large ribosomal subunit protein uL23 (98 aa).

This sequence belongs to the universal ribosomal protein uL23 family. In terms of assembly, part of the 50S ribosomal subunit. Contacts protein L29, and trigger factor when it is bound to the ribosome.

In terms of biological role, one of the early assembly proteins it binds 23S rRNA. One of the proteins that surrounds the polypeptide exit tunnel on the outside of the ribosome. Forms the main docking site for trigger factor binding to the ribosome. The protein is Large ribosomal subunit protein uL23 of Cellvibrio japonicus (strain Ueda107) (Pseudomonas fluorescens subsp. cellulosa).